The following is an 833-amino-acid chain: Urease (833 aa).

A Urease domain is found at 395 to 833 (GALDVHVHYI…LPLTKRYFVY (439 aa)). Ni(2+) is bound by residues His400 and His402. Urea-binding residues include His402 and Ala433. Lys483 serves as a coordination point for Ni(2+). An N6-carboxylysine modification is found at Lys483. Residues His485 and His512 each contribute to the urea site. Ni(2+)-binding residues include His512 and His538. His586 (proton donor) is an active-site residue. Asp626 is a binding site for Ni(2+). Urea is bound at residue Ala629.

This sequence in the C-terminal section; belongs to the metallo-dependent hydrolases superfamily. Urease alpha subunit family. Homohexamer. The cofactor is Ni(2+). Carboxylation allows a single lysine to coordinate two nickel ions.

The enzyme catalyses urea + 2 H2O + H(+) = hydrogencarbonate + 2 NH4(+). The protein operates within nitrogen metabolism; urea degradation; CO(2) and NH(3) from urea (urease route): step 1/1. The urease accessory proteins URE4, URE6 and URE7 are required for urease activity, URE7 supplying nickel for the functional urease. Plays a nutritional role via nitrogen acquisition in the environment. Contributes to the central nervous system invasion by enhancing yeast sequestration within microcapillary beds (such as within the brain) during hematogenous spread, thereby facilitating blood-to-brain invasion by C.neoformans. Affects fitness within the mammalian phagosome, promoting non-lytic exocytosis while delaying intracellular replication and thus reducing phagolysosomal membrane damage, events that could facilitate cryptococcal dissemination when transported inside macrophages. Urease activity is also associated with the regulation of key intracellular metabolic pathways, including melanin biosynthesis, polyamine biosynthesis, as well as intracellular levels of proline and reactive oxygen species. The chain is Urease from Cryptococcus neoformans var. neoformans serotype D (strain B-3501A) (Filobasidiella neoformans).